We begin with the raw amino-acid sequence, 128 residues long: MKKVKTVGKNTKRFITGIVHIRATFNNTFVNVTDVCGNTLYQTSVGACGFSGSRKSTPYAAGKVADSAAKKVIERFGMKVVSVIIRGPGFGAEAAVKALRNCGLTVTSIADKTAIPHNGCRLRKKRRV.

It belongs to the universal ribosomal protein uS11 family. Part of the 30S ribosomal subunit. Interacts with proteins S7 and S18. Binds to IF-3.

Its function is as follows. Located on the platform of the 30S subunit, it bridges several disparate RNA helices of the 16S rRNA. Forms part of the Shine-Dalgarno cleft in the 70S ribosome. The protein is Small ribosomal subunit protein uS11 of Wolbachia pipientis subsp. Culex pipiens (strain wPip).